The following is a 539-amino-acid chain: MSSTAENGDAVPGKQNEEKTYKKTASSAIKGAIQLGIGYTVGNLTSKPERDVLMQDFYVVESVFLPSEGSNLTPAHHYPDFRFKTYAPLAFRYFRELFGIKPDDYLYSICSEPLIELSNPGASGSLFFLTSDDEFIIKTVQHKEAEFLQKLLPGYYMNLNQNPRTLLPKFYGLYCMQSGGINIRIVVMNNVLPRAMRMHLTYDLKGSTYKRRASRKEREKPNPTFKDLDFLQDMHEGLYFDTETYNALMKTLQRDCRVLESFKIMDYSLLLGIHILDHSLKDKEEEPLQNAPDAKRPGMQKVLYSTAMESIQGPGKSADGIIAENPDTMGGIPAKSHKGEKLLLFMGIIDILQSYRLMKKLEHSWKALVYDGDTVSVHRPSFYADRFLKFMNSRVFKKIQALKASPSKKRCNSIAALKATSQEILSSISQEWKDEKQDLLTEGQSFSSLDEEALGSRHRPDLVPSTPSLFEAASLATTISSSSLYVGEHYPHDRTTLYSNSKGLPSSSTFTLEEGTIYLTAEPNALETQDDASVLDVYL.

Residues 1–21 (MSSTAENGDAVPGKQNEEKTY) are disordered. The PIPK domain maps to 25–395 (ASSAIKGAIQ…RFLKFMNSRV (371 aa)). Phosphoserine is present on residues Ser-445, Ser-447, and Ser-448.

In terms of assembly, interacts with RAC1, AJUBA, PLD1, PLD2 and ARF1.

It localises to the cytoplasm. It is found in the cytosol. The protein resides in the cell membrane. The protein localises to the endomembrane system. It carries out the reaction a 1,2-diacyl-sn-glycero-3-phospho-(1D-myo-inositol 4-phosphate) + ATP = a 1,2-diacyl-sn-glycero-3-phospho-(1D-myo-inositol-4,5-bisphosphate) + ADP + H(+). The catalysed reaction is 1-octadecanoyl-2-(5Z,8Z,11Z,14Z)-eicosatetraenoyl-sn-glycero-3-phospho-1D-myo-inositol 4-phosphate + ATP = 1-octadecanoyl-2-(5Z,8Z,11Z,14Z)-eicosatetraenoyl-sn-glycero-3-phospho-1D-myo-inositol 4,5-bisphosphate + ADP + H(+). The enzyme catalyses 1-octadecanoyl-2-(9Z)-octadecenoyl-sn-glycero-3-phospho-1D-myo-inositol 4-phosphate + ATP = 1-octadecanoyl-2-(9Z)-octadecenoyl-sn-glycero-3-phospho-1D-myo-inositol 4,5-bisphosphate + ADP + H(+). It catalyses the reaction 1-octadecanoyl-2-(9Z)-octadecenoyl-sn-glycero-3-phospho-1D-myo-inositol + ATP = 1-octadecanoyl-2-(9Z)-octadecenoyl-sn-glycero-3-phospho-1D-myo-inositol 5-phosphate + ADP + H(+). It carries out the reaction 1-octadecanoyl-2-(9Z,12Z)-octadecadienoyl-sn-glycero-3-phospho-1D-myo-inositol + ATP = 1-octadecanoyl-2-(9Z,12Z)-octadecadienoyl-sn-glycero-3-phospho-1D-myo-inositol 5-phosphate + ADP + H(+). The catalysed reaction is 1-octadecanoyl-2-(5Z,8Z,11Z,14Z-eicosatetraenoyl)-sn-glycero-3-phospho-(1D-myo-inositol) + ATP = 1-octadecanoyl-2-(5Z,8Z,11Z,14Z)-eicosatetraenoyl-sn-glycero-3-phospho-1D-myo-inositol 5-phosphate + ADP + H(+). The enzyme catalyses 1,2-di-(9Z,12Z)-octadecadienoyl-sn-glycero-3-phospho-1D-myo-inositol + ATP = 1,2-di(9Z,12Z)-octadecadienoyl-sn-glycero-3-phospho-1D-myo-inositol 5-phosphate + ADP + H(+). Catalyzes the phosphorylation of phosphatidylinositol 4-phosphate (PtdIns(4)P/PI4P) to form phosphatidylinositol 4,5-bisphosphate (PtdIns(4,5)P2/PIP2), a lipid second messenger that regulates several cellular processes such as signal transduction, vesicle trafficking, actin cytoskeleton dynamics, cell adhesion, and cell motility. PtdIns(4,5)P2 can directly act as a second messenger or can be utilized as a precursor to generate other second messengers: inositol 1,4,5-trisphosphate (IP3), diacylglycerol (DAG) or phosphatidylinositol-3,4,5-trisphosphate (PtdIns(3,4,5)P3/PIP3). Mediates RAC1-dependent reorganization of actin filaments. Contributes to the activation of phospholipase PLD2. Together with PIP5K1A, is required, after stimulation by G-protein coupled receptors, for the synthesis of IP3 that will induce stable platelet adhesion. The protein is Phosphatidylinositol 4-phosphate 5-kinase type-1 beta of Rattus norvegicus (Rat).